Here is a 168-residue protein sequence, read N- to C-terminus: Cell division inhibitor SulA (168 aa).

The segment at 105-111 is ftsZ binding; it reads ALLTGNY. The tract at residues 161–168 is lon protease binding; sequence KIHSTLYH.

Belongs to the SulA family. Interacts with FtsZ. In terms of processing, is rapidly cleaved and degraded by the Lon protease once DNA damage is repaired.

Functionally, component of the SOS system and an inhibitor of cell division. Accumulation of SulA causes rapid cessation of cell division and the appearance of long, non-septate filaments. In the presence of GTP, binds a polymerization-competent form of FtsZ in a 1:1 ratio, thus inhibiting FtsZ polymerization and therefore preventing it from participating in the assembly of the Z ring. This mechanism prevents the premature segregation of damaged DNA to daughter cells during cell division. This Pectobacterium carotovorum subsp. carotovorum (strain PC1) protein is Cell division inhibitor SulA.